We begin with the raw amino-acid sequence, 690 residues long: Calpain-9 (690 aa).

The segment at 1–24 (MPYLYRAPGPQAHPVPKDARITHS) is disordered. The Calpain catalytic domain maps to 42 to 337 (LFEDADFPAS…FDKVEICNLT (296 aa)). 3 residues coordinate Ca(2+): L81, G83, and D88. The active site involves C97. Residue E167 participates in Ca(2+) binding. Catalysis depends on residues H254 and N278. 5 residues coordinate Ca(2+): E284, D291, L312, D314, and E316. The interval 338–521 (PDALEEDAIH…PPDQETEEEQ (184 aa)) is domain III. A disordered region spans residues 498–519 (GNVDIDLPEPPKPTPPDQETEE). 3 consecutive EF-hand domains span residues 518 to 552 (EEEQ…VLQK), 561 to 589 (LSLI…FKVF), and 591 to 626 (DKLK…AGFQ). The domain IV stretch occupies residues 522–690 (RFRALFEQVA…NEFIHLTMNI (169 aa)). Ca(2+) is bound by residues D574, S576, N578, K580, E585, D604, D606, S608, T610, and E615.

The protein belongs to the peptidase C2 family. Expressed predominantly in stomach.

In terms of biological role, calcium-regulated non-lysosomal thiol-protease. The sequence is that of Calpain-9 (CAPN9) from Homo sapiens (Human).